A 217-amino-acid chain; its full sequence is Kunitz-type trypsin inhibitor-like 2 protein (217 aa).

Positions 1-26 (MKPLSPLTLSFLLFVFITTLSLAFSN) are cleaved as a signal peptide. 2 cysteine pairs are disulfide-bonded: Cys70/Cys115 and Cys168/Cys175. A glycan (N-linked (GlcNAc...) asparagine) is linked at Asn191.

Belongs to the protease inhibitor I3 (leguminous Kunitz-type inhibitor) family.

The protein localises to the secreted. Functionally, might act as a protease inhibitor involved in plant defense responses. This is Kunitz-type trypsin inhibitor-like 2 protein (PIP20-2) from Pisum sativum (Garden pea).